The sequence spans 933 residues: 2-oxoglutarate dehydrogenase E1 component (933 aa).

Belongs to the alpha-ketoglutarate dehydrogenase family. As to quaternary structure, homodimer. Part of the 2-oxoglutarate dehydrogenase (OGDH) complex composed of E1 (2-oxoglutarate dehydrogenase), E2 (dihydrolipoamide succinyltransferase) and E3 (dihydrolipoamide dehydrogenase); the complex contains multiple copies of the three enzymatic components (E1, E2 and E3). Interacts (via N-terminus) with SucB, the E2 component of OGDH complex. Thiamine diphosphate serves as cofactor.

The catalysed reaction is N(6)-[(R)-lipoyl]-L-lysyl-[protein] + 2-oxoglutarate + H(+) = N(6)-[(R)-S(8)-succinyldihydrolipoyl]-L-lysyl-[protein] + CO2. Functionally, E1 component of the 2-oxoglutarate dehydrogenase (OGDH) complex which catalyzes the decarboxylation of 2-oxoglutarate, the first step in the conversion of 2-oxoglutarate to succinyl-CoA and CO(2). The chain is 2-oxoglutarate dehydrogenase E1 component (sucA) from Escherichia coli O157:H7.